Here is a 334-residue protein sequence, read N- to C-terminus: RNA 3'-terminal phosphate cyclase (334 aa).

Residue 279–282 (HMGD) coordinates ATP. The Tele-AMP-histidine intermediate role is filled by His303.

This sequence belongs to the RNA 3'-terminal cyclase family. Type 1 subfamily.

It is found in the cytoplasm. The enzyme catalyses a 3'-end 3'-phospho-ribonucleotide-RNA + ATP = a 3'-end 2',3'-cyclophospho-ribonucleotide-RNA + AMP + diphosphate. Catalyzes the conversion of 3'-phosphate to a 2',3'-cyclic phosphodiester at the end of RNA. The mechanism of action of the enzyme occurs in 3 steps: (A) adenylation of the enzyme by ATP; (B) transfer of adenylate to an RNA-N3'P to produce RNA-N3'PP5'A; (C) and attack of the adjacent 2'-hydroxyl on the 3'-phosphorus in the diester linkage to produce the cyclic end product. The biological role of this enzyme is unknown but it is likely to function in some aspects of cellular RNA processing. The protein is RNA 3'-terminal phosphate cyclase of Metallosphaera sedula (strain ATCC 51363 / DSM 5348 / JCM 9185 / NBRC 15509 / TH2).